The primary structure comprises 317 residues: Testis-specific Y-encoded protein 1 (317 aa).

2 disordered regions span residues 1 to 39 (MSRP…FQVV) and 91 to 118 (DEEQ…PGGP). 2 stretches are compositionally biased toward basic and acidic residues: residues 15–26 (QGQEERERRSEE) and 95–112 (EQRP…EQGQ).

Belongs to the nucleosome assembly protein (NAP) family. Post-translationally, phosphorylated. As to expression, testis. Probably in spermatogonia.

It localises to the cytoplasm. It is found in the nucleus. In terms of biological role, may be involved in sperm differentiation and proliferation. The protein is Testis-specific Y-encoded protein 1 (TSPY1) of Bos taurus (Bovine).